The primary structure comprises 235 residues: Keratin-associated protein 4-16 (235 aa).

The 16 X 5 AA repeats of C-C-[GIKRQVHEML]-[SPTRV]-[STVQRCP] stretch occupies residues 1–132 (MCSSKMPCSP…CCCPCCCLRP (132 aa)). Tandem repeats lie at residues 23-27 (CCHPS), 28-32 (CCQTT), 33-37 (CCRTT), 48-52 (CCRPQ), 53-57 (CCHSV), 58-62 (CCQPT), 63-67 (CCRPS), 68-72 (CCQTT), 78-82 (CCHPS), 83-87 (CCVSS), 88-92 (CCRPQ), 93-97 (CCHSV), 103-107 (CCHPS), 108-112 (CCISS), 118-122 (CCESS), and 128-132 (CCLRP). Pro residues predominate over residues 203–224 (SPSPSLPSLSPPLPSPPLPSPH). The disordered stretch occupies residues 203-235 (SPSPSLPSLSPPLPSPPLPSPHFPSVNPKSMLQ).

It belongs to the KRTAP type 4 family. In terms of assembly, interacts with hair keratins.

In terms of biological role, in the hair cortex, hair keratin intermediate filaments are embedded in an interfilamentous matrix, consisting of hair keratin-associated proteins (KRTAP), which are essential for the formation of a rigid and resistant hair shaft through their extensive disulfide bond cross-linking with abundant cysteine residues of hair keratins. The matrix proteins include the high-sulfur and high-glycine-tyrosine keratins. The polypeptide is Keratin-associated protein 4-16 (Homo sapiens (Human)).